Reading from the N-terminus, the 89-residue chain is SAP domain-containing new25 (89 aa).

One can recognise an SAP domain in the interval 44 to 78 (PSQWSKKQLIEYCKKNSLKTSGSHEELVIRVQNHL).

The polypeptide is SAP domain-containing new25 (new25) (Schizosaccharomyces pombe (strain 972 / ATCC 24843) (Fission yeast)).